The primary structure comprises 321 residues: Lipoyl synthase (321 aa).

Positions 60, 65, 71, 86, 90, 93, and 299 each coordinate [4Fe-4S] cluster. The region spanning 72–288 (WEKKHATFMI…ETIGRTKGFL (217 aa)) is the Radical SAM core domain.

This sequence belongs to the radical SAM superfamily. Lipoyl synthase family. It depends on [4Fe-4S] cluster as a cofactor.

It is found in the cytoplasm. The catalysed reaction is [[Fe-S] cluster scaffold protein carrying a second [4Fe-4S](2+) cluster] + N(6)-octanoyl-L-lysyl-[protein] + 2 oxidized [2Fe-2S]-[ferredoxin] + 2 S-adenosyl-L-methionine + 4 H(+) = [[Fe-S] cluster scaffold protein] + N(6)-[(R)-dihydrolipoyl]-L-lysyl-[protein] + 4 Fe(3+) + 2 hydrogen sulfide + 2 5'-deoxyadenosine + 2 L-methionine + 2 reduced [2Fe-2S]-[ferredoxin]. The protein operates within protein modification; protein lipoylation via endogenous pathway; protein N(6)-(lipoyl)lysine from octanoyl-[acyl-carrier-protein]: step 2/2. Catalyzes the radical-mediated insertion of two sulfur atoms into the C-6 and C-8 positions of the octanoyl moiety bound to the lipoyl domains of lipoate-dependent enzymes, thereby converting the octanoylated domains into lipoylated derivatives. This Mesorhizobium japonicum (strain LMG 29417 / CECT 9101 / MAFF 303099) (Mesorhizobium loti (strain MAFF 303099)) protein is Lipoyl synthase.